The primary structure comprises 196 residues: Small ribosomal subunit protein uS4c (196 aa).

Residues 16–36 (GALPGLTRKTPKSGSNLKKKF) form a disordered region. Residues 89 to 169 (MRLDNILFRL…LPKHLTIDTL (81 aa)) form the S4 RNA-binding domain.

The protein belongs to the universal ribosomal protein uS4 family. In terms of assembly, part of the 30S ribosomal subunit. Contacts protein S5. The interaction surface between S4 and S5 is involved in control of translational fidelity.

Its subcellular location is the plastid. It localises to the chloroplast. Functionally, one of the primary rRNA binding proteins, it binds directly to 16S rRNA where it nucleates assembly of the body of the 30S subunit. In terms of biological role, with S5 and S12 plays an important role in translational accuracy. In Brachypodium pinnatum (Tor grass), this protein is Small ribosomal subunit protein uS4c (rps4).